The chain runs to 406 residues: Dihydroorotase, mitochondrial (406 aa).

The N-terminal 41 residues, 1-41 (MQTAATSTFFANPHVKHLPGPFLRPSPHYGALVHLPSFRNK), are a transit peptide targeting the mitochondrion. Zn(2+)-binding residues include H69, H71, K155, H193, H231, and D305. K155 carries the N6-carboxylysine modification.

The protein belongs to the metallo-dependent hydrolases superfamily. DHOase family. Class II DHOase subfamily. The cofactor is Zn(2+).

The protein localises to the mitochondrion. The catalysed reaction is (S)-dihydroorotate + H2O = N-carbamoyl-L-aspartate + H(+). The protein operates within pyrimidine metabolism; UMP biosynthesis via de novo pathway; (S)-dihydroorotate from bicarbonate: step 3/3. This is Dihydroorotase, mitochondrial (PYRC) from Oryza sativa subsp. japonica (Rice).